The chain runs to 261 residues: Neurexophilin-2 (261 aa).

An N-terminal signal peptide occupies residues 1 to 22 (MSLRPLPLLVVPGLLQLLFCDS). The tract at residues 23–87 (EEVIHNTESV…WDWLANITEI (65 aa)) is II. 4 N-linked (GlcNAc...) asparagine glycosylation sites follow: asparagine 83, asparagine 136, asparagine 146, and asparagine 152. The interval 88-166 (QEQLARTKRR…LVPPSKVVEF (79 aa)) is III. Residues 167 to 175 (EISPQSTLE) form an IV (linker domain) region. The tract at residues 176-261 (TKESKSFNCH…HSETPYLSFG (86 aa)) is v (Cys-rich).

The protein belongs to the neurexophilin family. May be proteolytically processed at the boundary between the N-terminal non-conserved and the central conserved domain in neuron-like cells.

It is found in the secreted. May be signaling molecules that resemble neuropeptides and that act by binding to alpha-neurexins and possibly other receptors. The protein is Neurexophilin-2 (Nxph2) of Mus musculus (Mouse).